The sequence spans 58 residues: uncharacterized protein (58 aa).

Disordered stretches follow at residues 1 to 20 and 38 to 58; these read MKKN…MNKK and IIET…KKQQ.

This is an uncharacterized protein from Bacillus subtilis (strain 168).